A 773-amino-acid polypeptide reads, in one-letter code: Molybdenum cofactor sulfurase (773 aa).

Lysine 243 carries the post-translational modification N6-(pyridoxal phosphate)lysine. Cysteine 410 is a catalytic residue. The MOSC domain maps to 632–773 (LRLLRQSGQR…LSCGDTVLVE (142 aa)). Serine 731 carries the post-translational modification Phosphoserine.

This sequence belongs to the class-V pyridoxal-phosphate-dependent aminotransferase family. MOCOS subfamily. It depends on pyridoxal 5'-phosphate as a cofactor.

The enzyme catalyses Mo-molybdopterin + L-cysteine + AH2 = thio-Mo-molybdopterin + L-alanine + A + H2O. It participates in cofactor biosynthesis; molybdopterin biosynthesis. Functionally, sulfurates the molybdenum cofactor. Sulfation of molybdenum is essential for xanthine dehydrogenase (XDH) and aldehyde oxidase (ADO) enzymes in which molybdenum cofactor is liganded by 1 oxygen and 1 sulfur atom in active form. The sequence is that of Molybdenum cofactor sulfurase from Drosophila ananassae (Fruit fly).